Consider the following 113-residue polypeptide: Ig heavy chain V-III region U61 (113 aa).

The Ig-like domain maps to 1–113 (EVKLEESGGG…YWGQGTLVPV (113 aa)). Residues Cys22 and Cys98 are joined by a disulfide bond.

The sequence is that of Ig heavy chain V-III region U61 from Mus musculus (Mouse).